The sequence spans 116 residues: NADPH-dependent 7-cyano-7-deazaguanine reductase (116 aa).

Cys31 functions as the Thioimide intermediate in the catalytic mechanism. Residue Asp38 is the Proton donor of the active site. Residues 53-55 (IEL) and 72-73 (YE) contribute to the substrate site.

The protein belongs to the GTP cyclohydrolase I family. QueF type 1 subfamily.

The protein resides in the cytoplasm. It carries out the reaction 7-aminomethyl-7-carbaguanine + 2 NADP(+) = 7-cyano-7-deazaguanine + 2 NADPH + 3 H(+). Its pathway is tRNA modification; tRNA-queuosine biosynthesis. Functionally, catalyzes the NADPH-dependent reduction of 7-cyano-7-deazaguanine (preQ0) to 7-aminomethyl-7-deazaguanine (preQ1). The sequence is that of NADPH-dependent 7-cyano-7-deazaguanine reductase from Chlorobaculum parvum (strain DSM 263 / NCIMB 8327) (Chlorobium vibrioforme subsp. thiosulfatophilum).